Here is a 246-residue protein sequence, read N- to C-terminus: Indole-3-glycerol phosphate synthase (246 aa).

The protein belongs to the TrpC family.

It catalyses the reaction 1-(2-carboxyphenylamino)-1-deoxy-D-ribulose 5-phosphate + H(+) = (1S,2R)-1-C-(indol-3-yl)glycerol 3-phosphate + CO2 + H2O. It participates in amino-acid biosynthesis; L-tryptophan biosynthesis; L-tryptophan from chorismate: step 4/5. The polypeptide is Indole-3-glycerol phosphate synthase (Sulfurisphaera tokodaii (strain DSM 16993 / JCM 10545 / NBRC 100140 / 7) (Sulfolobus tokodaii)).